The primary structure comprises 404 residues: Probable tRNA sulfurtransferase (404 aa).

A THUMP domain is found at 61 to 166 (EAVSERLKDV…SGYSYIMCDE (106 aa)). ATP-binding positions include 184–185 (LL), 209–210 (HF), Arg-266, Gly-288, and Gln-297.

Belongs to the ThiI family.

It localises to the cytoplasm. It catalyses the reaction [ThiI sulfur-carrier protein]-S-sulfanyl-L-cysteine + a uridine in tRNA + 2 reduced [2Fe-2S]-[ferredoxin] + ATP + H(+) = [ThiI sulfur-carrier protein]-L-cysteine + a 4-thiouridine in tRNA + 2 oxidized [2Fe-2S]-[ferredoxin] + AMP + diphosphate. The enzyme catalyses [ThiS sulfur-carrier protein]-C-terminal Gly-Gly-AMP + S-sulfanyl-L-cysteinyl-[cysteine desulfurase] + AH2 = [ThiS sulfur-carrier protein]-C-terminal-Gly-aminoethanethioate + L-cysteinyl-[cysteine desulfurase] + A + AMP + 2 H(+). It functions in the pathway cofactor biosynthesis; thiamine diphosphate biosynthesis. Its function is as follows. Catalyzes the ATP-dependent transfer of a sulfur to tRNA to produce 4-thiouridine in position 8 of tRNAs, which functions as a near-UV photosensor. Also catalyzes the transfer of sulfur to the sulfur carrier protein ThiS, forming ThiS-thiocarboxylate. This is a step in the synthesis of thiazole, in the thiamine biosynthesis pathway. The sulfur is donated as persulfide by IscS. The protein is Probable tRNA sulfurtransferase of Bacillus cereus (strain ZK / E33L).